A 78-amino-acid polypeptide reads, in one-letter code: Large ribosomal subunit protein eL38 (78 aa).

This sequence belongs to the eukaryotic ribosomal protein eL38 family. Component of the large ribosomal subunit. Mature ribosomes consist of a small (40S) and a large (60S) subunit. The 40S subunit contains about 32 different proteins and 1 molecule of RNA (18S). The 60S subunit contains 45 different proteins and 3 molecules of RNA (25S, 5.8S and 5S).

It is found in the cytoplasm. In terms of biological role, component of the ribosome, a large ribonucleoprotein complex responsible for the synthesis of proteins in the cell. The small ribosomal subunit (SSU) binds messenger RNAs (mRNAs) and translates the encoded message by selecting cognate aminoacyl-transfer RNA (tRNA) molecules. The large subunit (LSU) contains the ribosomal catalytic site termed the peptidyl transferase center (PTC), which catalyzes the formation of peptide bonds, thereby polymerizing the amino acids delivered by tRNAs into a polypeptide chain. The nascent polypeptides leave the ribosome through a tunnel in the LSU and interact with protein factors that function in enzymatic processing, targeting, and the membrane insertion of nascent chains at the exit of the ribosomal tunnel. The chain is Large ribosomal subunit protein eL38 from Candida albicans (strain SC5314 / ATCC MYA-2876) (Yeast).